A 364-amino-acid polypeptide reads, in one-letter code: Fructose-bisphosphate aldolase B (364 aa).

An N-acetylalanine modification is found at Ala2. An N6-succinyllysine modification is found at Lys13. The residue at position 36 (Ser36) is a Phosphoserine. At Thr39 the chain carries Phosphothreonine. Arg43 serves as a coordination point for beta-D-fructose 1,6-bisphosphate. Thr119 is modified (phosphothreonine). Residue Lys121 is modified to N6-succinyllysine. Ser132 carries the phosphoserine modification. Glu188 acts as the Proton acceptor in catalysis. Catalysis depends on Lys230, which acts as the Schiff-base intermediate with dihydroxyacetone-P. Phosphoserine occurs at positions 272, 276, 299, and 301. 272–274 (SGG) provides a ligand contact to beta-D-fructose 1,6-bisphosphate. Arg304 lines the beta-D-fructose 1,6-bisphosphate pocket. A Phosphoserine modification is found at Ser309. Lys317 is subject to N6-succinyllysine.

The protein belongs to the class I fructose-bisphosphate aldolase family. As to quaternary structure, homotetramer. Interacts with BBS1, BBS2, BBS4 and BBS7. Forms a ternary complex with G6PD and TP53; this interaction is direct.

Its subcellular location is the cytoplasm. The protein localises to the cytosol. It is found in the cytoskeleton. It localises to the microtubule organizing center. The protein resides in the centrosome. Its subcellular location is the centriolar satellite. The enzyme catalyses beta-D-fructose 1,6-bisphosphate = D-glyceraldehyde 3-phosphate + dihydroxyacetone phosphate. The catalysed reaction is beta-D-fructose 1-phosphate = D-glyceraldehyde + dihydroxyacetone phosphate. It participates in carbohydrate degradation; glycolysis; D-glyceraldehyde 3-phosphate and glycerone phosphate from D-glucose: step 4/4. Its pathway is carbohydrate biosynthesis; gluconeogenesis. It functions in the pathway carbohydrate metabolism; fructose metabolism. Functionally, catalyzes the aldol cleavage of fructose 1,6-biphosphate to form two triosephosphates dihydroxyacetone phosphate and D-glyceraldehyde 3-phosphate in glycolysis as well as the reverse stereospecific aldol addition reaction in gluconeogenesis. In fructolysis, metabolizes fructose 1-phosphate derived from the phosphorylation of dietary fructose by fructokinase into dihydroxyacetone phosphate and D-glyceraldehyde. Acts as an adapter independently of its enzymatic activity, exerts a tumor suppressor role by stabilizing the ternary complex with G6PD and TP53 to inhibit G6PD activity and keep oxidative pentose phosphate metabolism in check. The sequence is that of Fructose-bisphosphate aldolase B (ALDOB) from Bos taurus (Bovine).